Here is a 370-residue protein sequence, read N- to C-terminus: MSHPSPQAKPSNPSNPRVFFDVDIGGERVGRIVLELFADIVPKTAENFRALCTGEKGIGHTTGKPLHFKGCPFHRIIKKFMIQGGDFSNQNGTGGESIYGEKFEDENFHYKHDREGLLSMANAGRNTNGSQFFITTVPTPHLDGKHVVFGQVIKGIGVARILENVEVKGEKPAKLCVIAECGELKEGDDGGIFPKDGSGDSHPDFPEDADIDLKDVDKILLITEDLKNIGNTFFKSQNWEMAIKKYAEVLRYVDSSKAVIETADRAKLQPIALSCVLNIGACKLKMSNWQGAIDSCLEALELDPSNTKALYRRAQGWQGLKEYDQALADLKKAQGIAPEDKAIQAELLKVKQKIKAQKDKEKAVYAKMFA.

Serine 5 bears the Phosphoserine mark. The region spanning 19-183 (FFDVDIGGER…KLCVIAECGE (165 aa)) is the PPIase cyclophilin-type domain. An N6-acetyllysine modification is found at lysine 171. The tract at residues 185–215 (KEGDDGGIFPKDGSGDSHPDFPEDADIDLKD) is chaperone activity. Residue serine 198 is modified to Phosphoserine. The segment at 214 to 370 (KDVDKILLIT…EKAVYAKMFA (157 aa)) is interaction with HSP90AB1. TPR repeat units lie at residues 223 to 256 (TEDL…VDSS), 273 to 306 (LSCV…DPSN), and 307 to 340 (TKAL…APED).

The protein belongs to the cyclophilin-type PPIase family. PPIase D subfamily. In terms of assembly, identified in ESR1 or NR3C1/GCR steroid receptor-chaperone complexes. Found in HSP90 chaperone complexes with kinase clients LCK or EIF2AK1. Two monomers associate with one HSP90 homodimer. Interacts with HSP90AA1. Interacts with HSP90AB1; PPID and FKBP4 compete for binding to HSP90AB1 and the interaction is mutually exclusive with the PPID:HSPA8 interaction. Interacts with HSPA8; PPID and STIP1 but not FKBP4 compete for binding to HSPA8 and the interaction is mutually exclusive with the PPID:HSP90AB1 interaction. Interacts with S100A1 and S100A2; the interactions dissociate the PPID:HSP90AA1 interaction. Interacts with S100A6. Interacts with MYB, ILF2, XRCC6, RACK1 and RPS3. Interacts with cytoplasmic dynein 1 intermediate chain (DYNC1I1 or DYNC1I2). Widely expressed.

It localises to the cytoplasm. The protein resides in the nucleus. Its subcellular location is the nucleolus. The protein localises to the nucleoplasm. The enzyme catalyses [protein]-peptidylproline (omega=180) = [protein]-peptidylproline (omega=0). Less sensitive to inhibition by cyclosporin A than is CYP-18. Functionally, PPIase that catalyzes the cis-trans isomerization of proline imidic peptide bonds in oligopeptides and may therefore assist protein folding. Proposed to act as a co-chaperone in HSP90 complexes such as in unligated steroid receptors heterocomplexes. Different co-chaperones seem to compete for association with HSP90 thus establishing distinct HSP90-co-chaperone-receptor complexes with the potential to exert tissue-specific receptor activity control. May have a preference for estrogen receptor complexes and is not found in glucocorticoid receptor complexes. May be involved in cytoplasmic dynein-dependent movement of the receptor from the cytoplasm to the nucleus. May regulate MYB by inhibiting its DNA-binding activity. Involved in regulation of AHR signaling by promoting the formation of the AHR:ARNT dimer; the function is independent of HSP90 but requires the chaperone activity. Involved in regulation of UV radiation-induced apoptosis. Promotes cell viability in anaplastic lymphoma kinase-positive anaplastic large-cell lymphoma (ALK+ ALCL) cell lines. Its function is as follows. (Microbial infection) May be involved in hepatitis C virus (HCV) replication and release. This chain is Peptidyl-prolyl cis-trans isomerase D, found in Homo sapiens (Human).